The following is a 333-amino-acid chain: Mitochondrial glycine transporter (333 aa).

Solcar repeat units lie at residues 10–93 (SKST…IRQS), 125–209 (LSNT…GKKR), and 235–319 (HAAS…LIRR). The next 2 membrane-spanning stretches (helical) occupy residues 16–41 (FAAG…TRVQ) and 68–94 (GAVP…RQSA). A disordered region spans residues 98–126 (SPLPSSSSSTTTSSSTTTSSSSSSLPKLS). Transmembrane regions (helical) follow at residues 131-156 (LLAG…VRYE), 184-207 (GYGA…EQGK), 239-265 (INFA…KTRI), and 294-312 (GLAL…AWTV).

It belongs to the mitochondrial carrier (TC 2.A.29) family. SLC25A38 subfamily.

The protein resides in the mitochondrion inner membrane. The catalysed reaction is glycine(in) = glycine(out). Its function is as follows. Mitochondrial glycine transporter that imports glycine into the mitochondrial matrix. Plays an important role in providing glycine for the first enzymatic step in heme biosynthesis, the condensation of glycine with succinyl-CoA to produce 5-aminolevulinate (ALA) in the mitochondrial matrix. This Chaetomium globosum (strain ATCC 6205 / CBS 148.51 / DSM 1962 / NBRC 6347 / NRRL 1970) (Soil fungus) protein is Mitochondrial glycine transporter.